Consider the following 201-residue polypeptide: 3-isopropylmalate dehydratase small subunit (201 aa).

Belongs to the LeuD family. LeuD type 1 subfamily. In terms of assembly, heterodimer of LeuC and LeuD.

It carries out the reaction (2R,3S)-3-isopropylmalate = (2S)-2-isopropylmalate. Its pathway is amino-acid biosynthesis; L-leucine biosynthesis; L-leucine from 3-methyl-2-oxobutanoate: step 2/4. Its function is as follows. Catalyzes the isomerization between 2-isopropylmalate and 3-isopropylmalate, via the formation of 2-isopropylmaleate. In Kineococcus radiotolerans (strain ATCC BAA-149 / DSM 14245 / SRS30216), this protein is 3-isopropylmalate dehydratase small subunit.